A 537-amino-acid chain; its full sequence is Myosin-binding protein H (537 aa).

Over residues 1–25 (MTGKTAPAAAKKAPAAKKAPAPASK) the composition is skewed to low complexity. The disordered stretch occupies residues 1–138 (MTGKTAPAAA…KPKEEPPSVP (138 aa)). Over residues 26-69 (KAPEPAPKEKPAPTPKEGHAPTPKEEHAPPPKEEHAPPPKEEHA) the composition is skewed to basic and acidic residues. A compositionally biased stretch (low complexity) spans 87–104 (EQPAAPAAEHAPTPTHEA). Over residues 112–124 (PPPAAPAEAPAPE) the composition is skewed to pro residues. Residues 137–232 (VPLSLAVEEV…LEQPVLIREI (96 aa)) form the Fibronectin type-III 1 domain. One can recognise an Ig-like C2-type 1 domain in the interval 236-324 (PRIRLPRQLR…NGAEDKAILD (89 aa)). Residues 333–428 (PPQNLKLVDV…AAGVAHIKKT (96 aa)) form the Fibronectin type-III 2 domain. Residues 444 to 528 (PKFTQPLTDR…VNPLGEASVD (85 aa)) form the Ig-like C2-type 2 domain.

Belongs to the immunoglobulin superfamily. MyBP family. Skeletal muscle. Seems to be also expressed in the slow tonic ald muscle. Not detected in gizzard or heart.

In terms of biological role, binds to myosin; probably involved in interaction with thick myofilaments in the A-band. This chain is Myosin-binding protein H (MYBPH), found in Gallus gallus (Chicken).